We begin with the raw amino-acid sequence, 347 residues long: Phenylalanine--tRNA ligase alpha subunit (347 aa).

Glu-265 contributes to the Mg(2+) binding site.

The protein belongs to the class-II aminoacyl-tRNA synthetase family. Phe-tRNA synthetase alpha subunit type 1 subfamily. In terms of assembly, tetramer of two alpha and two beta subunits. It depends on Mg(2+) as a cofactor.

The protein localises to the cytoplasm. The catalysed reaction is tRNA(Phe) + L-phenylalanine + ATP = L-phenylalanyl-tRNA(Phe) + AMP + diphosphate + H(+). In Wolbachia pipientis subsp. Culex pipiens (strain wPip), this protein is Phenylalanine--tRNA ligase alpha subunit.